The sequence spans 382 residues: Protein phosphatase 1A (382 aa).

A lipid anchor (N-myristoyl glycine) is attached at G2. A PPM-type phosphatase domain is found at 23–291 (RYGLSSMQGW…DNMSVILICF (269 aa)). 4 residues coordinate Mn(2+): D60, G61, D239, and D282. S375 and S377 each carry phosphoserine.

The protein belongs to the PP2C family. In terms of assembly, monomer. Interacts with SMAD2; the interaction dephosphorylates SMAD2 in its C-terminal SXS motif resulting in disruption of the SMAD2/SMAD4 complex, SMAD2 nuclear export and termination of the TGF-beta-mediated signaling. Interacts with SMAD2; the interaction dephosphorylates SMAD2 in its C-terminal SXS motif resulting in disruption of the SMAD2/SMAD4 complex, SMAD2 nuclear export and termination of the TGF-beta-mediated signaling. Interacts with the phosphorylated form of IKBKB/IKKB. Mg(2+) is required as a cofactor. It depends on Mn(2+) as a cofactor. N-myristoylation is essential for the recognition of its substrates for dephosphorylation.

It localises to the nucleus. Its subcellular location is the cytoplasm. The protein resides in the cytosol. It is found in the membrane. It carries out the reaction O-phospho-L-seryl-[protein] + H2O = L-seryl-[protein] + phosphate. It catalyses the reaction O-phospho-L-threonyl-[protein] + H2O = L-threonyl-[protein] + phosphate. Enzyme with a broad specificity. Negatively regulates TGF-beta signaling through dephosphorylating SMAD2 and SMAD3, resulting in their dissociation from SMAD4, nuclear export of the SMADs and termination of the TGF-beta-mediated signaling. Dephosphorylates PRKAA1 and PRKAA2. Plays an important role in the termination of TNF-alpha-mediated NF-kappa-B activation through dephosphorylating and inactivating IKBKB/IKKB. The sequence is that of Protein phosphatase 1A (PPM1A) from Bos taurus (Bovine).